Reading from the N-terminus, the 400-residue chain is Cysteine desulfurase 1 (400 aa).

Residues 71-72 (GT), asparagine 150, glutamine 178, and 198-200 (SGH) contribute to the pyridoxal 5'-phosphate site. N6-(pyridoxal phosphate)lysine is present on lysine 201. Threonine 236 lines the pyridoxal 5'-phosphate pocket. Residue cysteine 324 is the Cysteine persulfide intermediate of the active site. Residue cysteine 324 coordinates [2Fe-2S] cluster.

This sequence belongs to the class-V pyridoxal-phosphate-dependent aminotransferase family. NifS/IscS subfamily. In terms of assembly, homodimer. Pyridoxal 5'-phosphate is required as a cofactor.

The catalysed reaction is (sulfur carrier)-H + L-cysteine = (sulfur carrier)-SH + L-alanine. In terms of biological role, catalyzes the removal of elemental sulfur atoms from cysteine to produce alanine. Seems to participate in the biosynthesis of the nitrogenase metalloclusters by providing the inorganic sulfur required for the Fe-S core formation. The sequence is that of Cysteine desulfurase 1 from Trichormus variabilis (strain ATCC 29413 / PCC 7937) (Anabaena variabilis).